Here is a 220-residue protein sequence, read N- to C-terminus: Charged multivesicular body protein 2a (220 aa).

Coiled-coil stretches lie at residues 12–53 and 199–220; these read EEML…MAKQ and PSAA…LRRD. The interval 179–208 is disordered; sequence LSNLPSTGGSLSVAGAKKGEPSAALADADA. Positions 208–218 match the MIT-interacting motif motif; sequence ADLEERLNNLR.

Belongs to the SNF7 family. In terms of assembly, probable core component of the endosomal sorting required for transport complex III (ESCRT-III). ESCRT-III components are thought to multimerize to form a flat lattice on the perimeter membrane of the endosome.

The protein localises to the late endosome membrane. It localises to the cytoplasm. Functionally, probable core component of the endosomal sorting required for transport complex III (ESCRT-III) which is involved in multivesicular bodies (MVBs) formation and sorting of endosomal cargo proteins into MVBs. MVBs contain intraluminal vesicles (ILVs) that are generated by invagination and scission from the limiting membrane of the endosome and mostly are delivered to lysosomes enabling degradation of membrane proteins, such as stimulated growth factor receptors, lysosomal enzymes and lipids. The sequence is that of Charged multivesicular body protein 2a (chmp2a) from Xenopus tropicalis (Western clawed frog).